We begin with the raw amino-acid sequence, 377 residues long: 23S rRNA (uracil(747)-C(5))-methyltransferase RlmC (377 aa).

Residues Cys3, Cys11, Cys14, and Cys87 each contribute to the [4Fe-4S] cluster site. S-adenosyl-L-methionine-binding residues include Gln212, Phe241, Glu262, and Asn307. The Nucleophile role is filled by Cys334.

It belongs to the class I-like SAM-binding methyltransferase superfamily. RNA M5U methyltransferase family. RlmC subfamily.

The enzyme catalyses uridine(747) in 23S rRNA + S-adenosyl-L-methionine = 5-methyluridine(747) in 23S rRNA + S-adenosyl-L-homocysteine + H(+). Catalyzes the formation of 5-methyl-uridine at position 747 (m5U747) in 23S rRNA. This chain is 23S rRNA (uracil(747)-C(5))-methyltransferase RlmC, found in Xenorhabdus bovienii (strain SS-2004) (Xenorhabdus nematophila subsp. bovienii).